The following is a 617-amino-acid chain: Syncytin-A (617 aa).

The N-terminal stretch at 1-17 is a signal peptide; that stretch reads MVRPWVFCLLLFPCSSA. Over 18 to 544 the chain is Extracellular; sequence YSDSWMPLVN…WIQWLGLGPW (527 aa). An N-linked (GlcNAc...) asparagine glycan is attached at N27. The short motif at 44-47 is the CXXC element; sequence CWVC. 3 disulfides stabilise this stretch: C44–C47, C44–C505, and C497–C504. N-linked (GlcNAc...) asparagine glycosylation is found at N272 and N365. A fusion peptide region spans residues 420-440; that stretch reads LLPLLAGLGIASALGLGIAGI. The CX6CC motif lies at 497 to 505; the sequence is CLFLQEECC. The chain crosses the membrane as a helical span at residues 545-565; that stretch reads LPSWLTSLMAPILFILVLLVF. Over 566–617 the chain is Cytoplasmic; it reads RPCLLNCLTHSVSRRMSSFIHTTTEGHVDKILLLRESQYKRLPQEPPEEDAV.

This sequence belongs to the gamma type-C retroviral envelope protein family. As to quaternary structure, the mature protein consists of a trimer of SU-TM heterodimers. The SU-TM heterodimers are attached by a labile interchain disulfide bond. In terms of processing, synthesized as an inactive precursor that is heavily N-glycosylated and processed likely by furin in the Golgi to yield the mature SU and TM proteins. The cleavage site between SU and TM requires the minimal sequence [KR]-X-[KR]-R. The CXXC motif is highly conserved across a broad range of retroviral envelope proteins. It is thought to participate in the formation of a labile disulfide bond possibly with the CX6CC motif present in the transmembrane protein. Isomerization of the intersubunit disulfide bond to an SU intrachain disulfide bond is thought to occur upon receptor recognition in order to allow membrane fusion. In terms of tissue distribution, highly expressed in placenta where it localizes to syncytiotrophoblasts of the labyrinthine zona. Specifically localizes to syncytiotrophoblast layer I (SynT-I). Also detected at very low levels in hippocampus, brain, testis and ovary.

Its subcellular location is the cell membrane. Functionally, this endogenous retroviral envelope protein has retained its original fusogenic properties. Together with Synb, participates in trophoblast fusion and the formation of a syncytium during placenta morphogenesis. Syna is essential for placental development and is specifically required for formation of syncytiotrophoblast layer I (SynT-I). Promotes muscle myoblast fusion. Does not have immunosuppressive activity. The polypeptide is Syncytin-A (Mus musculus (Mouse)).